Consider the following 319-residue polypeptide: Thioredoxin reductase (319 aa).

36–43 (TGTNKGGQ) contributes to the FAD binding site. Cysteines 136 and 139 form a disulfide. 288–297 (DVIDHVYRQA) contacts FAD.

Belongs to the class-II pyridine nucleotide-disulfide oxidoreductase family. Homodimer. FAD is required as a cofactor.

The protein localises to the cytoplasm. It catalyses the reaction [thioredoxin]-dithiol + NADP(+) = [thioredoxin]-disulfide + NADPH + H(+). In Buchnera aphidicola subsp. Acyrthosiphon pisum (strain APS) (Acyrthosiphon pisum symbiotic bacterium), this protein is Thioredoxin reductase (trxB).